The primary structure comprises 130 residues: Protein PELPK2 (130 aa).

The first 32 residues, 1–32, serve as a signal peptide directing secretion; it reads MTLKKSFSASLLSPFLIICLIALLSVPVSVGA. A run of 13 repeats spans residues 47-51, 52-56, 58-62, 63-67, 69-73, 74-78, 80-84, 91-95, 97-101, 102-106, 108-112, 113-117, and 121-125. The 13 X 5 AA tandem repeat of P-[DEGQ]-[AEFLIV]-[QPT]-K stretch occupies residues 47-125; it reads PELPKPEMPK…TKVPAFTMPK (79 aa). The segment covering 71 to 84 has biased composition (basic and acidic residues); sequence IPKPEMPKLPEIQK. Residues 71-130 form a disordered region; that stretch reads IPKPEMPKLPEIQKPELPTFPELPKMPEFPKFDFPKLPELPKPEETKVPAFTMPKFPGSP. Positions 98 to 117 are enriched in basic and acidic residues; sequence EFPKFDFPKLPELPKPEETK.

Its subcellular location is the secreted. The protein resides in the cell wall. In Arabidopsis thaliana (Mouse-ear cress), this protein is Protein PELPK2.